Here is a 154-residue protein sequence, read N- to C-terminus: Mating pheromone 2 (154 aa).

The N-terminal stretch at 1-16 (MKAIFIILAILMVTQA) is a signal peptide. A propeptide spanning residues 17–52 (FKMTSKVNTKLQSQIQSKFQSKNKLASTFQTSSQLK) is cleaved from the precursor.

The protein resides in the secreted. Its function is as follows. Mating ciliate pheromones (or gamones) are diffusible extracellular communication signals that distinguish different intraspecific classes of cells commonly referred to as 'mating types'. They prepare the latter for conjugation by changing their cell surface properties. The chain is Mating pheromone 2 from Euplotoides octocarinatus (Freshwater ciliate).